The chain runs to 511 residues: MAPRPRKRVSRPKPRATSRGRGGGDEDPFFESEPKRRRGGGRDEDIESEDSDLEGVAAAAAGGVGDDGEEEEEEEEEQETAGEKKMRIAKELLKKVTDAARRRREDDEDEDEGEEAGRRRVADILLKRQFEESGRKRMELADRILQPDPEDGFKMLVKHRQPVTAVVLSKDSDKGFSASKDGVIVHWDVETGKSEKYLWPSENVLVSHHAKPPLSAKRSKQVLALAVSADGRYLASGGLDRHIHLWDVRSREHIQAFSGHRGAISCLSFGPDSSELFSGSFDRKIMQWNAEDRTYMNCLFGHQNEVLTMDALSKDRLLTVARDRTMHLWKIPEESQLLFRAPATASLECCCFIDDKEFLTGSDDGSVELWSIMRKKPTHIIRNAHPVFRNNLNSLENNVEENGIHKPESVSSAQSWVSAIAARRGSDLAASGAANGSVRLWAIEPDSKGIRPLFSLRLDGFVNSLAIPKSGRFIVAGVGQEPRLGRWGRVRSAQNGVVIHPIRLKEESEDL.

The segment covering 1 to 18 (MAPRPRKRVSRPKPRATS) has biased composition (basic residues). The interval 1-117 (MAPRPRKRVS…EDEDEGEEAG (117 aa)) is disordered. Composition is skewed to acidic residues over residues 44–53 (EDIESEDSDL) and 66–80 (DDGEEEEEEEEEQET). Over residues 81-105 (AGEKKMRIAKELLKKVTDAARRRRE) the composition is skewed to basic and acidic residues. WD repeat units follow at residues 158-197 (KHRQPVTAVVLSKDSDKGFSASKDGVIVHWDVETGKSEKY), 217-256 (KRSKQVLALAVSADGRYLASGGLDRHIHLWDVRSREHIQA), 259-298 (GHRGAISCLSFGPDSSELFSGSFDRKIMQWNAEDRTYMNC), 301-339 (GHQNEVLTMDALSKDRLLTVARDRTMHLWKIPEESQLLF), 342-380 (PATASLECCCFIDDKEFLTGSDDGSVELWSIMRKKPTHI), 412-451 (SAQSWVSAIAARRGSDLAASGAANGSVRLWAIEPDSKGIR), and 457-497 (RLDG…QNGV).

The protein belongs to the WD repeat RRP9 family.

It is found in the nucleus. The protein resides in the nucleolus. Functionally, component of a nucleolar small nuclear ribonucleoprotein particle (snoRNP) thought to participate in the processing and modification of pre-ribosomal RNA. Essential for embryogenesis. This is U3 snoRNP-associated protein-like YAOH from Oryza sativa subsp. japonica (Rice).